Here is a 429-residue protein sequence, read N- to C-terminus: tRNA-2-methylthio-N(6)-dimethylallyladenosine synthase (429 aa).

Residues 2–115 form the MTTase N-terminal domain; sequence KLLYLQTLGC…ISEAVKTPKF (114 aa). Positions 11, 46, 78, 147, 151, and 154 each coordinate [4Fe-4S] cluster. Residues 133-365 enclose the Radical SAM core domain; the sequence is RGSPYKAFVN…QSRHNEILDE (233 aa). Residues 368–429 form the TRAM domain; it reads KNQVGKIFDV…RMVLYGKITA (62 aa).

Belongs to the methylthiotransferase family. MiaB subfamily. As to quaternary structure, monomer. The cofactor is [4Fe-4S] cluster.

The protein resides in the cytoplasm. The enzyme catalyses N(6)-dimethylallyladenosine(37) in tRNA + (sulfur carrier)-SH + AH2 + 2 S-adenosyl-L-methionine = 2-methylsulfanyl-N(6)-dimethylallyladenosine(37) in tRNA + (sulfur carrier)-H + 5'-deoxyadenosine + L-methionine + A + S-adenosyl-L-homocysteine + 2 H(+). Catalyzes the methylthiolation of N6-(dimethylallyl)adenosine (i(6)A), leading to the formation of 2-methylthio-N6-(dimethylallyl)adenosine (ms(2)i(6)A) at position 37 in tRNAs that read codons beginning with uridine. The sequence is that of tRNA-2-methylthio-N(6)-dimethylallyladenosine synthase from Campylobacter hominis (strain ATCC BAA-381 / DSM 21671 / CCUG 45161 / LMG 19568 / NCTC 13146 / CH001A).